The primary structure comprises 370 residues: Propane 2-monooxygenase, reductase component (370 aa).

Residues 1-14 show a composition bias toward basic residues; the sequence is MAPRPLRRHPPLHH. The interval 1 to 21 is disordered; sequence MAPRPLRRHPPLHHSFHESRR. The 2Fe-2S ferredoxin-type domain maps to 28–118; that stretch reads HRINFEPVDI…DCTIELLNFD (91 aa). Residues C62, C67, C70, and C102 each coordinate [2Fe-2S] cluster. Residues 128–229 enclose the FAD-binding FR-type domain; sequence IQDVRTRVTR…TGPYGSFTIK (102 aa).

It belongs to the TmoA/XamoA family. In terms of assembly, the propane 2-monooxygenase multicomponent enzyme system is composed of an electron transfer component and a monooxygenase component interacting with the effector protein PrmD. The electron transfer component is composed of a reductase (PrmB), and the monooxygenase component is formed by a large subunit (PrmA) and a small subunit (PrmC). Requires FAD as cofactor. [2Fe-2S] cluster serves as cofactor.

Functionally, reductase component of the propane 2-monooxygenase multicomponent enzyme system which is involved in the degradation of propane via the O2-dependent hydroxylation of propane. Reductase catalyzes the transfer of electrons from NADH or NADPH to monooxygenase. The sequence is that of Propane 2-monooxygenase, reductase component from Rhodococcus jostii (strain RHA1).